Consider the following 219-residue polypeptide: 2-hydroxy-3-keto-5-methylthiopentenyl-1-phosphate phosphatase (219 aa).

It belongs to the HAD-like hydrolase superfamily. MtnX family.

The enzyme catalyses 2-hydroxy-5-methylsulfanyl-3-oxopent-1-enyl phosphate + H2O = 1,2-dihydroxy-5-(methylsulfanyl)pent-1-en-3-one + phosphate. It participates in amino-acid biosynthesis; L-methionine biosynthesis via salvage pathway; L-methionine from S-methyl-5-thio-alpha-D-ribose 1-phosphate: step 4/6. Dephosphorylates 2-hydroxy-3-keto-5-methylthiopentenyl-1-phosphate (HK-MTPenyl-1-P) yielding 1,2-dihydroxy-3-keto-5-methylthiopentene (DHK-MTPene). The chain is 2-hydroxy-3-keto-5-methylthiopentenyl-1-phosphate phosphatase from Bacillus cereus (strain 03BB102).